We begin with the raw amino-acid sequence, 446 residues long: Phosphoglucosamine mutase (446 aa).

Ser99 serves as the catalytic Phosphoserine intermediate. Mg(2+)-binding residues include Ser99, Asp242, Asp244, and Asp246. At Ser99 the chain carries Phosphoserine.

It belongs to the phosphohexose mutase family. It depends on Mg(2+) as a cofactor. Post-translationally, activated by phosphorylation.

The catalysed reaction is alpha-D-glucosamine 1-phosphate = D-glucosamine 6-phosphate. In terms of biological role, catalyzes the conversion of glucosamine-6-phosphate to glucosamine-1-phosphate. The chain is Phosphoglucosamine mutase from Campylobacter hominis (strain ATCC BAA-381 / DSM 21671 / CCUG 45161 / LMG 19568 / NCTC 13146 / CH001A).